We begin with the raw amino-acid sequence, 940 residues long: UvrABC system protein A (940 aa).

Gly-31 to Ser-38 is an ATP binding site. The segment at Cys-252–Cys-279 adopts a C4-type zinc-finger fold. ABC transporter domains follow at residues Trp-309–Leu-586 and Arg-606–Lys-936. Gly-639–Ser-646 contacts ATP. The C4-type zinc-finger motif lies at Cys-739 to Cys-765.

This sequence belongs to the ABC transporter superfamily. UvrA family. As to quaternary structure, forms a heterotetramer with UvrB during the search for lesions.

It localises to the cytoplasm. In terms of biological role, the UvrABC repair system catalyzes the recognition and processing of DNA lesions. UvrA is an ATPase and a DNA-binding protein. A damage recognition complex composed of 2 UvrA and 2 UvrB subunits scans DNA for abnormalities. When the presence of a lesion has been verified by UvrB, the UvrA molecules dissociate. The chain is UvrABC system protein A from Vibrio parahaemolyticus serotype O3:K6 (strain RIMD 2210633).